The following is a 184-amino-acid chain: Peptide deformylase (184 aa).

The Fe cation site is built by Cys-111 and His-154. Glu-155 is a catalytic residue. His-158 lines the Fe cation pocket.

The protein belongs to the polypeptide deformylase family. Fe(2+) serves as cofactor.

The enzyme catalyses N-terminal N-formyl-L-methionyl-[peptide] + H2O = N-terminal L-methionyl-[peptide] + formate. Its function is as follows. Removes the formyl group from the N-terminal Met of newly synthesized proteins. Requires at least a dipeptide for an efficient rate of reaction. N-terminal L-methionine is a prerequisite for activity but the enzyme has broad specificity at other positions. In Lactobacillus gasseri (strain ATCC 33323 / DSM 20243 / BCRC 14619 / CIP 102991 / JCM 1131 / KCTC 3163 / NCIMB 11718 / NCTC 13722 / AM63), this protein is Peptide deformylase.